The following is a 34-amino-acid chain: U4-theraphotoxin-Hs1a (34 aa).

3 disulfides stabilise this stretch: Cys-3–Cys-17, Cys-10–Cys-22, and Cys-16–Cys-33.

The protein belongs to the neurotoxin 14 (magi-1) family. 05 (ICK-7) subfamily. As to expression, expressed by the venom gland.

The protein resides in the secreted. In terms of biological role, intracisternal injection paralyzes mice. The sequence is that of U4-theraphotoxin-Hs1a from Cyriopagopus schmidti (Chinese bird spider).